A 165-amino-acid chain; its full sequence is MALAEADDGAVVFGEEQEALVLKSWAVMKKDAANLGLRFFLKVFEIAPSAEQMFSFLRDSDVPLEKNPKLKTHAMSVFVMTCEAAAQLRKAGKVTVRETTLKRLGATHLRYGVADGHFEVTGFALLETIKEALPADMWSLEMKKAWAEAYSQLVAAIKREMKPDA.

The Globin domain maps to 12–162 (VFGEEQEALV…LVAAIKREMK (151 aa)). The Homodimerization signature appears at 45 to 49 (EIAPS). S55, K69, H73, R103, T107, and H108 together coordinate heme b. Residues 115 to 127 (DGHFEVTGFALLE) carry the Homodimerization motif.

It belongs to the plant globin family. Homodimer. The cofactor is heme b. In embryonic organs and at low levels in vegetative organs.

It localises to the cytoplasm. The protein localises to the nucleus. The catalysed reaction is Fe(III)-heme b-[protein] + nitric oxide + H2O = Fe(II)-heme b-[protein] + nitrite + 2 H(+). In terms of biological role, phytoglobin that reduces nitrite to nitric oxide (NO) under anoxic conditions (e.g. during flooding or in waterlogged soil). May not function as an oxygen storage or transport protein. Has an unusually high affinity for O(2) through an hexacoordinate heme iron because of a very low dissociation constant. The protein is Anaerobic nitrite reductase GLB1 (HB) of Zea mays (Maize).